Reading from the N-terminus, the 426-residue chain is Transcription factor bHLH60 (426 aa).

Composition is skewed to polar residues over residues 117 to 137 (QNGN…SSAN) and 148 to 172 (TDSS…QNNR). Residues 117–201 (QNGNISGETP…SSEENEKLPY (85 aa)) are disordered. The segment covering 191 to 200 (KSSEENEKLP) has biased composition (basic and acidic residues). The 98-residue stretch at 210-307 (QATDSHSLAE…DEIINHVQSL (98 aa)) folds into the bHLH domain. Positions 367 to 398 (HRQLQQPPTQQWPFDGLNQPVWGREEDQAHGN) are disordered.

As to quaternary structure, homodimer. In terms of tissue distribution, expressed constitutively in roots, leaves, stems, and flowers.

It is found in the nucleus. The sequence is that of Transcription factor bHLH60 (BHLH60) from Arabidopsis thaliana (Mouse-ear cress).